Here is a 312-residue protein sequence, read N- to C-terminus: MAIYLDFENHIKEIQNEIELALIRGDEDAKEILEKRLDKEVKSIYSNLTDFQKLQLARHPDRPYAMDYIDLILKDKYEVFGDRHYNDDKAIVCFIGKIDNVPVVVIGEEKGRGTKNKLLRNFGMPNPCGYRKALKMAKFAEKFNLPILMLVDTAGAYPGIGAEERGQSEAIAKNLQEFASLKVPTISVIIGEGGSGGALAIAVADKLAMMEYSIFSVISPEGCAAILWDDPSKTEVAIKAMKITPRDLKEAGLIDDIILEPSKGAHRDKFSAANTIKEYFLDALRTIQQDPHFLENRYQKLMSLGSFVESMN.

The CoA carboxyltransferase C-terminal domain occupies 36–286 (RLDKEVKSIY…KEYFLDALRT (251 aa)).

The protein belongs to the AccA family. As to quaternary structure, acetyl-CoA carboxylase is a heterohexamer composed of biotin carboxyl carrier protein (AccB), biotin carboxylase (AccC) and two subunits each of ACCase subunit alpha (AccA) and ACCase subunit beta (AccD).

The protein localises to the cytoplasm. The enzyme catalyses N(6)-carboxybiotinyl-L-lysyl-[protein] + acetyl-CoA = N(6)-biotinyl-L-lysyl-[protein] + malonyl-CoA. Its pathway is lipid metabolism; malonyl-CoA biosynthesis; malonyl-CoA from acetyl-CoA: step 1/1. In terms of biological role, component of the acetyl coenzyme A carboxylase (ACC) complex. First, biotin carboxylase catalyzes the carboxylation of biotin on its carrier protein (BCCP) and then the CO(2) group is transferred by the carboxyltransferase to acetyl-CoA to form malonyl-CoA. The polypeptide is Acetyl-coenzyme A carboxylase carboxyl transferase subunit alpha (Helicobacter pylori (strain HPAG1)).